The sequence spans 301 residues: Ribosomal RNA small subunit methyltransferase A (301 aa).

Residues Asn23, Ile25, Gly50, Glu72, Asp97, and Asn149 each contribute to the S-adenosyl-L-methionine site.

This sequence belongs to the class I-like SAM-binding methyltransferase superfamily. rRNA adenine N(6)-methyltransferase family. RsmA subfamily.

The protein localises to the cytoplasm. The enzyme catalyses adenosine(1518)/adenosine(1519) in 16S rRNA + 4 S-adenosyl-L-methionine = N(6)-dimethyladenosine(1518)/N(6)-dimethyladenosine(1519) in 16S rRNA + 4 S-adenosyl-L-homocysteine + 4 H(+). Its function is as follows. Specifically dimethylates two adjacent adenosines (A1518 and A1519) in the loop of a conserved hairpin near the 3'-end of 16S rRNA in the 30S particle. May play a critical role in biogenesis of 30S subunits. This chain is Ribosomal RNA small subunit methyltransferase A, found in Rickettsia conorii (strain ATCC VR-613 / Malish 7).